A 370-amino-acid chain; its full sequence is 4-hydroxy-3-methylbut-2-en-1-yl diphosphate synthase (flavodoxin) (370 aa).

[4Fe-4S] cluster contacts are provided by cysteine 270, cysteine 273, cysteine 305, and glutamate 312.

Belongs to the IspG family. The cofactor is [4Fe-4S] cluster.

It catalyses the reaction (2E)-4-hydroxy-3-methylbut-2-enyl diphosphate + oxidized [flavodoxin] + H2O + 2 H(+) = 2-C-methyl-D-erythritol 2,4-cyclic diphosphate + reduced [flavodoxin]. It participates in isoprenoid biosynthesis; isopentenyl diphosphate biosynthesis via DXP pathway; isopentenyl diphosphate from 1-deoxy-D-xylulose 5-phosphate: step 5/6. Functionally, converts 2C-methyl-D-erythritol 2,4-cyclodiphosphate (ME-2,4cPP) into 1-hydroxy-2-methyl-2-(E)-butenyl 4-diphosphate. In Saccharophagus degradans (strain 2-40 / ATCC 43961 / DSM 17024), this protein is 4-hydroxy-3-methylbut-2-en-1-yl diphosphate synthase (flavodoxin).